Here is a 1939-residue protein sequence, read N- to C-terminus: Myosin-4 (1939 aa).

In terms of domain architecture, Myosin N-terminal SH3-like spans 33-82; it reads DAKTSVFVVDPKESYVKAIVQSREGGKVTAKTEAGATVTVKEDQVFSMNP. A phosphothreonine mark is found at T64 and T69. S79 is modified (phosphoserine). Residues 86–782 form the Myosin motor domain; it reads DKIEDMAMMT…LLGTLEEMRD (697 aa). At K130 the chain carries N6,N6,N6-trimethyllysine. ATP is bound at residue 179–186; it reads GESGAGKT. A Phosphotyrosine modification is found at Y389. T391 is subject to Phosphothreonine. Position 392 is a phosphoserine (S392). T419 carries the post-translational modification Phosphothreonine. Y424 carries the post-translational modification Phosphotyrosine. Phosphoserine is present on S625. The tract at residues 659-681 is actin-binding; it reads LNKLMTNLRSTHPHFVRCIIPNE. H757 carries the post-translational modification Pros-methylhistidine. The actin-binding stretch occupies residues 761–775; the sequence is KFGHTKVFFKAGLLG. The residue at position 776 (T776) is a Phosphothreonine. In terms of domain architecture, IQ spans 785 to 814; the sequence is LAQLITRTQAICRGFLMRVEFRKMMERRES. Positions 843-1939 form a coiled coil; sequence LLKSAETEKE…EVHTKVISEE (1097 aa). S1092, S1162, and S1237 each carry phosphoserine. Residue T1241 is modified to Phosphothreonine. Residue S1243 is modified to Phosphoserine. T1255 carries the post-translational modification Phosphothreonine. S1261 bears the Phosphoserine mark. A Phosphothreonine modification is found at T1265. The residue at position 1278 (S1278) is a Phosphoserine. Residue T1286 is modified to Phosphothreonine. Phosphoserine is present on residues S1288, S1292, S1303, S1306, and S1413. Y1464 bears the Phosphotyrosine mark. At T1467 the chain carries Phosphothreonine. S1474 is modified (phosphoserine). Phosphotyrosine is present on Y1492. S1495 carries the phosphoserine modification. A Phosphothreonine modification is found at T1501. S1514 carries the post-translational modification Phosphoserine. Phosphothreonine is present on T1517. Phosphoserine is present on residues S1542, S1547, S1554, S1574, S1600, S1603, S1714, and S1726. Phosphothreonine occurs at positions 1730 and 1736. Phosphoserine is present on S1739.

This sequence belongs to the TRAFAC class myosin-kinesin ATPase superfamily. Myosin family. Muscle myosin is a hexameric protein that consists of 2 heavy chain subunits (MHC), 2 alkali light chain subunits (MLC) and 2 regulatory light chain subunits (MLC-2).

Its subcellular location is the cytoplasm. It localises to the myofibril. Functionally, muscle contraction. The sequence is that of Myosin-4 (MYH4) from Homo sapiens (Human).